The primary structure comprises 241 residues: Adenylate kinase 3 (241 aa).

Position 38-43 (38-43 (GCGKGT)) interacts with ATP. Residues 58–87 (ATGDMLRAAVAAKTPLGIKAKEAMDKGELV) are NMP. AMP-binding positions include T59, R64, 85–87 (ELV), 113–116 (GFPR), and Q120. The tract at residues 154 to 191 (GRWIHPSSGRSYHTKFAPPKTPGLDDVTGEPLIQRKDD) is LID. An ATP-binding site is contributed by R155. R188 and R199 together coordinate AMP.

The protein belongs to the adenylate kinase family.

Its subcellular location is the cytoplasm. It carries out the reaction AMP + ATP = 2 ADP. In terms of biological role, catalyzes the reversible transfer of the terminal phosphate group between ATP and AMP. Plays an important role in cellular energy homeostasis and in adenine nucleotide metabolism. This is Adenylate kinase 3 (ADK-A) from Oryza sativa subsp. japonica (Rice).